The chain runs to 484 residues: Dual specificity protein kinase CLK1 (484 aa).

The interval 1 to 42 (MRHSKRTYCPDWDDKDWDYGKWRSSSSHKRRKRSHSSAQENK) is disordered. A compositionally biased stretch (basic residues) spans 26–35 (SSHKRRKRSH). S61 bears the Phosphoserine mark. Residues 79–146 (DYTQGCEPGH…RTRSVEDDEE (68 aa)) form a disordered region. Positions 86–97 (PGHRQRDHESRY) are enriched in basic and acidic residues. Low complexity predominate over residues 100–112 (HSSKSSGRSGRSS). Positions 113–138 (YKSKHRIHHSTSHRRSHGKSHRRKRT) are enriched in basic residues. At T138 the chain carries Phosphothreonine. S140 bears the Phosphoserine mark. The Protein kinase domain maps to 161–477 (YEIVDTLGEG…LREALKHPFF (317 aa)). ATP contacts are provided by residues 167–175 (LGEGAFGKV) and K191. Catalysis depends on D288, which acts as the Proton acceptor.

Belongs to the protein kinase superfamily. CMGC Ser/Thr protein kinase family. Lammer subfamily. In terms of assembly, interacts with PPIG and UBL5. In terms of processing, autophosphorylates on all three types of residues. In terms of tissue distribution, endothelial cells.

It localises to the nucleus. The catalysed reaction is L-seryl-[protein] + ATP = O-phospho-L-seryl-[protein] + ADP + H(+). It catalyses the reaction L-threonyl-[protein] + ATP = O-phospho-L-threonyl-[protein] + ADP + H(+). The enzyme catalyses L-tyrosyl-[protein] + ATP = O-phospho-L-tyrosyl-[protein] + ADP + H(+). With respect to regulation, regulates splicing of its own pre-mRNA according to its kinase activity; increased expression of the catalytically active form influences splicing to generate the catalytically inactive splicing variant lacking the kinase domain. Leucettine L41 inhibits its kinase activity and affects the regulation of alternative splicing mediated by phosphorylation of SR proteins. Dual specificity kinase acting on both serine/threonine and tyrosine-containing substrates. Phosphorylates serine- and arginine-rich (SR) proteins of the spliceosomal complex and may be a constituent of a network of regulatory mechanisms that enable SR proteins to control RNA splicing. Phosphorylates: SRSF1, SRSF3 and PTPN1. Regulates the alternative splicing of tissue factor (F3) pre-mRNA in endothelial cells. The chain is Dual specificity protein kinase CLK1 from Homo sapiens (Human).